A 240-amino-acid chain; its full sequence is Cell division control protein 14 (240 aa).

As to quaternary structure, interacts with sid1.

It localises to the cytoplasm. The protein resides in the cytoskeleton. The protein localises to the microtubule organizing center. Its subcellular location is the spindle pole body. In terms of biological role, has a role in the septation initiation network (SIN) required for cytokinesis. This Schizosaccharomyces pombe (strain 972 / ATCC 24843) (Fission yeast) protein is Cell division control protein 14 (cdc14).